A 379-amino-acid polypeptide reads, in one-letter code: MQTQFIKTIEFERPGMESGSSCVAHAWARTPATPSPEEKIALKDRIRHLLKEREAVLVAHYYVDADLQDLAEETGGCVSDSLEMARFGRDHPAKTLVVAGVKFMGETAKILSPEKTILMPDLDATCSLDLGCPVDEFHAFCDAHPDRVVVVYANTSAAVKARADWMVTSSIGLKIVEHLHVQGKKILWAPDKHLGGYIQKQTGADMLLWQGSCLVHDEFKAVELELLKKEHPLAKVLVHPESPAAVVALADAVGSTSQLIHAAQTMDAPEFIVATDNGILHKMKMAAPGKIFIDAPTAGNSATCKSCAHCPWMAMNGLQNLLDVLESGRNEIHVDPEIGRKATVCIDRMLDFAAAQKANVRPSSDLAKEQKLFSGIGPA.

Iminosuccinate contacts are provided by H60 and S81. Position 126 (C126) interacts with [4Fe-4S] cluster. Iminosuccinate contacts are provided by residues 152–154 (YAN) and S169. C213 provides a ligand contact to [4Fe-4S] cluster. Iminosuccinate-binding positions include 239-241 (HPE) and T256. [4Fe-4S] cluster is bound at residue C310.

The protein belongs to the quinolinate synthase family. Type 1 subfamily. The cofactor is [4Fe-4S] cluster.

The protein localises to the cytoplasm. It catalyses the reaction iminosuccinate + dihydroxyacetone phosphate = quinolinate + phosphate + 2 H2O + H(+). It participates in cofactor biosynthesis; NAD(+) biosynthesis; quinolinate from iminoaspartate: step 1/1. Its function is as follows. Catalyzes the condensation of iminoaspartate with dihydroxyacetone phosphate to form quinolinate. The protein is Quinolinate synthase of Herminiimonas arsenicoxydans.